Here is a 314-residue protein sequence, read N- to C-terminus: Small ribosomal subunit biogenesis GTPase RsgA (314 aa).

Positions 1-21 (MKRAPTKQPAKPAARGGERAQ) are disordered. The region spanning 85–246 (SDQFKSKLFA…LIDSPGFQEF (162 aa)) is the CP-type G domain. Residues 134-137 (NKID) and 188-196 (GQSGMGKST) contribute to the GTP site. The Zn(2+) site is built by C270, C275, H277, and C283.

The protein belongs to the TRAFAC class YlqF/YawG GTPase family. RsgA subfamily. Monomer. Associates with 30S ribosomal subunit, binds 16S rRNA. It depends on Zn(2+) as a cofactor.

Its subcellular location is the cytoplasm. Its function is as follows. One of several proteins that assist in the late maturation steps of the functional core of the 30S ribosomal subunit. Helps release RbfA from mature subunits. May play a role in the assembly of ribosomal proteins into the subunit. Circularly permuted GTPase that catalyzes slow GTP hydrolysis, GTPase activity is stimulated by the 30S ribosomal subunit. The sequence is that of Small ribosomal subunit biogenesis GTPase RsgA from Burkholderia pseudomallei (strain 1106a).